We begin with the raw amino-acid sequence, 103 residues long: Viscotoxin-B (103 aa).

Residues 1–6 (FRNVES) form the signal peptide. Disulfide bonds link Cys-9-Cys-46, Cys-10-Cys-38, and Cys-22-Cys-32. A propeptide spans 53–103 (FYCTLGCQSSKCASITTPPNSEVDAEAVRCKAACSNLCDFGVTTNQEIQDD) (acidic domain).

This sequence belongs to the plant thionin (TC 1.C.44) family.

Its subcellular location is the secreted. Its function is as follows. Thionins are small plant proteins which are toxic to animal cells. They seem to exert their toxic effect at the level of the cell membrane. Their precise function is not known. The protein is Viscotoxin-B (THI2.2) of Viscum album (European mistletoe).